We begin with the raw amino-acid sequence, 137 residues long: Large ribosomal subunit protein uL16 (137 aa).

It belongs to the universal ribosomal protein uL16 family. As to quaternary structure, part of the 50S ribosomal subunit.

Functionally, binds 23S rRNA and is also seen to make contacts with the A and possibly P site tRNAs. This is Large ribosomal subunit protein uL16 from Streptococcus pyogenes serotype M1.